The chain runs to 395 residues: Na(+)/H(+) antiporter NhaA (395 aa).

11 helical membrane-spanning segments follow: residues 11-31, 61-81, 96-116, 127-147, 156-176, 179-199, 215-237, 262-282, 295-315, 334-354, and 366-386; these read FQLE…ALII, LLLW…GLEV, IVLP…IYWF, GWAI…ALLG, LFLM…IAIF, GELS…LVAM, LILW…TLAF, VAYG…LSGV, IAVG…WLAV, VAIL…LAFV, and MGIL…TAAA.

Belongs to the NhaA Na(+)/H(+) (TC 2.A.33) antiporter family.

It is found in the cell inner membrane. The catalysed reaction is Na(+)(in) + 2 H(+)(out) = Na(+)(out) + 2 H(+)(in). Functionally, na(+)/H(+) antiporter that extrudes sodium in exchange for external protons. This chain is Na(+)/H(+) antiporter NhaA, found in Pseudomonas fluorescens (strain Pf0-1).